Reading from the N-terminus, the 227-residue chain is Enolase-phosphatase E1 (227 aa).

This sequence belongs to the HAD-like hydrolase superfamily. MasA/MtnC family. Monomer. The cofactor is Mg(2+).

It catalyses the reaction 5-methylsulfanyl-2,3-dioxopentyl phosphate + H2O = 1,2-dihydroxy-5-(methylsulfanyl)pent-1-en-3-one + phosphate. It participates in amino-acid biosynthesis; L-methionine biosynthesis via salvage pathway; L-methionine from S-methyl-5-thio-alpha-D-ribose 1-phosphate: step 3/6. It functions in the pathway amino-acid biosynthesis; L-methionine biosynthesis via salvage pathway; L-methionine from S-methyl-5-thio-alpha-D-ribose 1-phosphate: step 4/6. Its function is as follows. Bifunctional enzyme that catalyzes the enolization of 2,3-diketo-5-methylthiopentyl-1-phosphate (DK-MTP-1-P) into the intermediate 2-hydroxy-3-keto-5-methylthiopentenyl-1-phosphate (HK-MTPenyl-1-P), which is then dephosphorylated to form the acireductone 1,2-dihydroxy-3-keto-5-methylthiopentene (DHK-MTPene). The polypeptide is Enolase-phosphatase E1 (Azotobacter vinelandii (strain DJ / ATCC BAA-1303)).